The chain runs to 406 residues: Succinylornithine transaminase (406 aa).

Lysine 252 is modified (N6-(pyridoxal phosphate)lysine).

The protein belongs to the class-III pyridoxal-phosphate-dependent aminotransferase family. AstC subfamily. The cofactor is pyridoxal 5'-phosphate.

It carries out the reaction N(2)-succinyl-L-ornithine + 2-oxoglutarate = N-succinyl-L-glutamate 5-semialdehyde + L-glutamate. It participates in amino-acid degradation; L-arginine degradation via AST pathway; L-glutamate and succinate from L-arginine: step 3/5. In terms of biological role, catalyzes the transamination of N(2)-succinylornithine and alpha-ketoglutarate into N(2)-succinylglutamate semialdehyde and glutamate. Can also act as an acetylornithine aminotransferase. In Shigella sonnei (strain Ss046), this protein is Succinylornithine transaminase.